The primary structure comprises 404 residues: NADH-quinone oxidoreductase subunit D (404 aa).

Belongs to the complex I 49 kDa subunit family. As to quaternary structure, NDH-1 is composed of 14 different subunits. Subunits NuoB, C, D, E, F, and G constitute the peripheral sector of the complex.

The protein resides in the cell inner membrane. The catalysed reaction is a quinone + NADH + 5 H(+)(in) = a quinol + NAD(+) + 4 H(+)(out). NDH-1 shuttles electrons from NADH, via FMN and iron-sulfur (Fe-S) centers, to quinones in the respiratory chain. The immediate electron acceptor for the enzyme in this species is believed to be ubiquinone. Couples the redox reaction to proton translocation (for every two electrons transferred, four hydrogen ions are translocated across the cytoplasmic membrane), and thus conserves the redox energy in a proton gradient. This chain is NADH-quinone oxidoreductase subunit D, found in Dinoroseobacter shibae (strain DSM 16493 / NCIMB 14021 / DFL 12).